The primary structure comprises 86 residues: Large ribosomal subunit protein bL31 (86 aa).

The interval Tyr65–Ser86 is disordered. Residues Ser73–Ser86 show a composition bias toward basic and acidic residues.

Belongs to the bacterial ribosomal protein bL31 family. Type A subfamily. In terms of assembly, part of the 50S ribosomal subunit.

Functionally, binds the 23S rRNA. The protein is Large ribosomal subunit protein bL31 of Prochlorococcus marinus (strain NATL1A).